The chain runs to 1792 residues: uncharacterized protein (1792 aa).

The span at 1–28 (MNNNNNNNNNSNNNNNSNNNNNGNSNNN) shows a compositional bias: low complexity. 13 disordered regions span residues 1–34 (MNNN…SGKG), 162–187 (TNIS…SHHH), 440–461 (KKRK…NKSS), 544–568 (VIDD…SIIN), 736–777 (NKNK…INSN), 837–979 (TKGK…NDLK), 1044–1071 (VSKS…KEQS), 1084–1106 (NMNN…NDNK), 1160–1215 (TSSG…VLER), 1257–1290 (NITA…NNNG), 1651–1686 (LRSK…GRKK), 1704–1731 (PRKK…NSEK), and 1742–1761 (IENK…NLNN). Positions 169 to 182 (KQPISSNQHPYQQK) are enriched in polar residues. Residues 550–559 (KRNKKEKKKT) show a composition bias toward basic residues. Low complexity predominate over residues 741–776 (PNNINSNDNNNKNDDNNNNNNKNVDGNNNNNNNINS). Positions 838-847 (KGKKKGRKKK) are enriched in basic residues. Residues 856–873 (NIKEDIKSSKKDKKKDNI) show a composition bias toward basic and acidic residues. The segment covering 874-924 (NDNNNDNNNDNNNDNNNDNNNDNNNDNNNDNNNNNNNNNNNNNNNNNNNHN) has biased composition (low complexity). Positions 943 to 954 (KKKTRQYRKKSK) are enriched in basic residues. Basic and acidic residues predominate over residues 955-966 (ITNDDNNEKIKQ). Over residues 1045–1057 (SKSNIPSSFSSPP) the composition is skewed to low complexity. 3 stretches are compositionally biased toward basic and acidic residues: residues 1060 to 1071 (TNNKNDIDKEQS), 1088 to 1106 (EKSK…NDNK), and 1166 to 1192 (NKEE…KNVD). The segment covering 1205-1215 (RKKRKKDVLER) has biased composition (basic residues). The span at 1261 to 1289 (NNNNDNNKNNDNDNNNNNNDNIINNNNNN) shows a compositional bias: low complexity. Composition is skewed to basic residues over residues 1660–1686 (KEHK…GRKK) and 1704–1717 (PRKK…RKSK).

This is an uncharacterized protein from Plasmodium falciparum (isolate 3D7).